The following is a 78-amino-acid chain: MLTLKKSMLLLFFLGMVSLSLANSKRADEEGEDKRADEEGEDKRADEEGEDKRADEEGEEKRKRFLGGILNTITGLLG.

The N-terminal stretch at 1-22 (MLTLKKSMLLLFFLGMVSLSLA) is a signal peptide. Positions 23 to 64 (NSKRADEEGEDKRADEEGEDKRADEEGEDKRADEEGEEKRKR) are excised as a propeptide. The segment at 24–60 (SKRADEEGEDKRADEEGEDKRADEEGEDKRADEEGEE) is disordered. The segment covering 25–60 (KRADEEGEDKRADEEGEDKRADEEGEDKRADEEGEE) has biased composition (basic and acidic residues). Leu-77 is subject to Leucine amide.

It belongs to the frog skin active peptide (FSAP) family. Brevinin subfamily. In terms of tissue distribution, expressed by the skin glands.

The protein resides in the secreted. Functionally, antimicrobial peptide. Active against the Gram-positive bacterium S.aureus (MIC=30 uM) and the yeast C.albicans (MIC=100 uM). Not effective against the Gram-negative bacterium E.coli at concentrations up to 250 uM. Lacks ability to induce contraction of smooth muscle in isolated guinea pig urinary bladder. Elicits histamine release from rat peritoneal mast cells. The polypeptide is Kassorin-S (Kassina senegalensis (Senegal running frog)).